We begin with the raw amino-acid sequence, 243 residues long: uncharacterized protein (243 aa).

The 179-residue stretch at 26–204 folds into the VWFA domain; the sequence is RVGLVLDITG…ISDDELYDAL (179 aa). The interval 222 to 243 is disordered; sequence REQEPPAEKPKKKGFFSRLFSK. A compositionally biased stretch (basic residues) spans 231-243; sequence PKKKGFFSRLFSK.

This is an uncharacterized protein from Bacillus subtilis (strain 168).